A 668-amino-acid chain; its full sequence is Beta-galactosidase (668 aa).

The first 24 residues, 1–24 (MARPAAVRVLWALLLPLLLGSARG), serve as a signal peptide directing secretion. The propeptide occupies 25–29 (LRNAS). Positions 84, 130, and 188 each coordinate substrate. The Proton donor role is filled by glutamate 189. A disulfide bond links cysteine 196 and cysteine 231. Asparagine 248 is a glycosylation site (N-linked (GlcNAc...) asparagine). Residue glutamate 269 is the Nucleophile of the active site. Position 334 (tyrosine 334) interacts with substrate. 4 N-linked (GlcNAc...) asparagine glycosylation sites follow: asparagine 465, asparagine 499, asparagine 546, and asparagine 556. Cysteine 627 and cysteine 635 are disulfide-bonded.

The protein belongs to the glycosyl hydrolase 35 family. As to quaternary structure, homodimer. May form higher multimers.

Its subcellular location is the lysosome. It catalyses the reaction Hydrolysis of terminal non-reducing beta-D-galactose residues in beta-D-galactosides.. In terms of biological role, cleaves beta-linked terminal galactosyl residues from gangliosides, glycoproteins, and glycosaminoglycans. The protein is Beta-galactosidase (GLB1) of Canis lupus familiaris (Dog).